The sequence spans 464 residues: Citrate synthase, mitochondrial (464 aa).

Residues 1–27 constitute a mitochondrion transit peptide; it reads MALLTAATRLLGAKNSSCLVLAARHAS. Positions 2–21 match the SIFI-degron motif; the sequence is ALLTAATRLLGAKNSSCLVL. Lys57 is subject to N6-succinyllysine. The residue at position 76 (Lys76) is an N6-acetyllysine; alternate. Lys76 is subject to N6-succinyllysine; alternate. Lys103 and Lys193 each carry N6-succinyllysine. Position 226 is a phosphoserine (Ser226). His301 is a catalytic residue. Lys321 and Lys327 each carry N6-acetyllysine; alternate. Residues Lys321 and Lys327 each carry the N6-succinyllysine; alternate modification. Residue His347 is part of the active site. Position 356 (Arg356) interacts with oxaloacetate. Lys375 is modified (N6-acetyllysine; alternate). Position 375 is an N6-succinyllysine; alternate (Lys375). Lys382 is subject to N6-acetyllysine. Residue Lys393 is modified to N6-acetyllysine; alternate. Lys393 is subject to N6-succinyllysine; alternate. N6,N6,N6-trimethyllysine is present on Lys395. Residue Asp402 is part of the active site. Oxaloacetate is bound by residues Arg428 and Arg448. Position 450 is an N6-succinyllysine (Lys450). At Lys459 the chain carries N6-acetyllysine; alternate. Lys459 carries the N6-succinyllysine; alternate modification.

It belongs to the citrate synthase family. Homodimer. Methylated. Trimethylation at Lys-395 by CSKMT decreases citrate synthase activity. In terms of processing, in response to mitochondrial stress, the precursor protein is ubiquitinated by the SIFI complex in the cytoplasm before mitochondrial import, leading to its degradation. Within the SIFI complex, UBR4 initiates ubiquitin chain that are further elongated or branched by KCMF1.

Its subcellular location is the mitochondrion matrix. It carries out the reaction oxaloacetate + acetyl-CoA + H2O = citrate + CoA + H(+). It participates in carbohydrate metabolism; tricarboxylic acid cycle; isocitrate from oxaloacetate: step 1/2. Its function is as follows. Key enzyme of the Krebs tricarboxylic acid cycle which catalyzes the synthesis of citrate from acetyl coenzyme A and oxaloacetate. The chain is Citrate synthase, mitochondrial (Cs) from Mus musculus (Mouse).